Consider the following 364-residue polypeptide: tRNA 2-selenouridine synthase (364 aa).

The region spanning 14–137 is the Rhodanese domain; that stretch reads LLADTPLIDV…LRQTAIQATW (124 aa). The active-site S-selanylcysteine intermediate is the Cys-97.

This sequence belongs to the SelU family. As to quaternary structure, monomer.

It carries out the reaction 5-methylaminomethyl-2-thiouridine(34) in tRNA + selenophosphate + (2E)-geranyl diphosphate + H2O + H(+) = 5-methylaminomethyl-2-selenouridine(34) in tRNA + (2E)-thiogeraniol + phosphate + diphosphate. The catalysed reaction is 5-methylaminomethyl-2-thiouridine(34) in tRNA + (2E)-geranyl diphosphate = 5-methylaminomethyl-S-(2E)-geranyl-thiouridine(34) in tRNA + diphosphate. The enzyme catalyses 5-methylaminomethyl-S-(2E)-geranyl-thiouridine(34) in tRNA + selenophosphate + H(+) = 5-methylaminomethyl-2-(Se-phospho)selenouridine(34) in tRNA + (2E)-thiogeraniol. It catalyses the reaction 5-methylaminomethyl-2-(Se-phospho)selenouridine(34) in tRNA + H2O = 5-methylaminomethyl-2-selenouridine(34) in tRNA + phosphate. In terms of biological role, involved in the post-transcriptional modification of the uridine at the wobble position (U34) of tRNA(Lys), tRNA(Glu) and tRNA(Gln). Catalyzes the conversion of 2-thiouridine (S2U-RNA) to 2-selenouridine (Se2U-RNA). Acts in a two-step process involving geranylation of 2-thiouridine (S2U) to S-geranyl-2-thiouridine (geS2U) and subsequent selenation of the latter derivative to 2-selenouridine (Se2U) in the tRNA chain. The chain is tRNA 2-selenouridine synthase from Salmonella enteritidis PT4 (strain P125109).